Consider the following 532-residue polypeptide: MVDDKEKNMKCLTFFLMLPETVKNRSKKSSKKTNTGGGGGGSSSSSSSSSNSKLPPVCYEIITLKTKKKKKMAADIFPRKKPANSSSTTVQQYHQQNLSNNNLIPAPNWQGLYPTIRERNAVMFNNDLMADVHFVVGPPGGTQRLPGHKYVLAVGSSVFHAMFYGELAEDKDEIRIPDVEPAAFLAMLKYIYCDEIDLAADTVLATLYAAKKYIVPHLARACVNFLETSLSAKNACVLLSQSCLFEEPDLTQRCWEVIDAQAELALKSEGFCDIDFQTLESILRRETLNAKEIVVFEAALNWAEVECQRQDLALSIENKRKVLGKALYLIRIPTMALDDFANGAAQSGVLTLNETNDIFLWYTAAKKPELQFVSKARKGLVPQRCHRFQSCAYRSNQWRYRGRCDSIQFAVDKRVFIAGFGLYGSSCGSAEYSAKIELKRQGVVLGQNLSKYFSDGSSNTFPVWFEYPVQIEPDTFYTASVILDGNELSYFGQEGMTEVQCGKVTVQFQCSSDSTNGTGVQGGQIPELIFYA.

Residues 23 to 54 (KNRSKKSSKKTNTGGGGGGSSSSSSSSSNSKL) form a disordered region. Positions 43–53 (SSSSSSSSNSK) are enriched in low complexity. The region spanning 130 to 200 (ADVHFVVGPP…IYCDEIDLAA (71 aa)) is the BTB domain. The region spanning 245–310 (FEEPDLTQRC…NWAEVECQRQ (66 aa)) is the BACK domain.

In terms of tissue distribution, expressed in visual cortex. Expressed in visual cortex layer IV neurons.

The protein localises to the cytoplasm. It is found in the cytosol. It localises to the nucleus. In terms of biological role, acts as a key regulator of dendritic field orientation during development of sensory cortex. Also directs dendrites toward active axon terminals when ectopically expressed. The polypeptide is BTB/POZ domain-containing protein 3 (BTBD3) (Mustela putorius furo (European domestic ferret)).